Reading from the N-terminus, the 1457-residue chain is Eye-specific diacylglycerol kinase (1457 aa).

Disordered regions lie at residues 1 to 123 (MQQQ…SSEA), 136 to 177 (RSHS…PPCI), and 207 to 339 (YSNT…QPTT). Composition is skewed to low complexity over residues 22 to 62 (SATT…LRTT), 98 to 115 (SQRASSSLLKQQSSSSAS), and 141 to 154 (DSATASAGSDDSGT). Over residues 214-253 (ASEDEDEVEGHNAEEEEEGSAAIEDAEEETTEAATEEADE) the composition is skewed to acidic residues. The segment covering 254–266 (DPRTEVESEHDHD) has biased composition (basic and acidic residues). Residues 294 to 303 (RLPRQMRRHT) are compositionally biased toward basic residues. Phorbol-ester/DAG-type zinc fingers lie at residues 591–641 (HYWK…TLAC) and 661–724 (HHWV…GEEC). The segment at 758–799 (NNAASGSGGGGAGGGAGGGGGKSKKQTQRRQKGKEEKKEPRA) is disordered. A compositionally biased stretch (gly residues) spans 763–778 (GSGGGGAGGGAGGGGG). Over residues 779 to 789 (KSKKQTQRRQK) the composition is skewed to basic residues. The DAGKc domain occupies 808–944 (PEVIPVIVFI…MDRWRVKVTP (137 aa)). The disordered stretch occupies residues 1264 to 1302 (TPDQERSFAAFSQRQAQNERRQMDQAQGRGPGSTDEDLQ). ANK repeat units lie at residues 1320–1349 (QTSDAILLAAQSGDLNMLRALHEQGYSLQS), 1353–1382 (NGQTALHFACKYNHRDIVKYIIASATRRLI), 1389–1418 (LGQTALHIAAEQNRRDICVMLVAAGAHLDT), and 1422–1451 (GGNTPMMVAFNKNANEIATYLESKQGTQPV).

The protein belongs to the eukaryotic diacylglycerol kinase family. In terms of tissue distribution, expressed specifically in adult eye.

It localises to the membrane. It catalyses the reaction a 1,2-diacyl-sn-glycerol + ATP = a 1,2-diacyl-sn-glycero-3-phosphate + ADP + H(+). Functionally, required for the maintenance of phospholipid turnover within the photoreceptor. The polypeptide is Eye-specific diacylglycerol kinase (rdgA) (Drosophila melanogaster (Fruit fly)).